Here is a 278-residue protein sequence, read N- to C-terminus: Urease accessory protein UreD (278 aa).

The protein belongs to the UreD family. In terms of assembly, ureD, UreF and UreG form a complex that acts as a GTP-hydrolysis-dependent molecular chaperone, activating the urease apoprotein by helping to assemble the nickel containing metallocenter of UreC. The UreE protein probably delivers the nickel.

It is found in the cytoplasm. Required for maturation of urease via the functional incorporation of the urease nickel metallocenter. The protein is Urease accessory protein UreD of Staphylococcus epidermidis (strain ATCC 12228 / FDA PCI 1200).